The chain runs to 531 residues: 5-(hydroxymethyl)furfural oxidase (531 aa).

FAD is bound by residues 15–16, 36–37, Trp68, Leu94, Gly98, 102–105, Val233, and Trp466; these read TA, EA, and NMVV. Residue His467 is the Proton acceptor of the active site. FAD contacts are provided by residues Ala501 and 512-513; that span reads TN.

It belongs to the GMC oxidoreductase family. In terms of assembly, monomer. Requires FAD as cofactor.

It carries out the reaction 5-hydroxymethylfurfural + 3 O2 + 2 H2O = 2,5-dicarboxyfuran + 3 H2O2 + 2 H(+). It catalyses the reaction benzylthiol + O2 = benzothialdehyde + H2O2. Functionally, involved in the degradation and detoxification of 5-(hydroxymethyl)furfural (HMF) by mediating its oxidation to furan-2,5-dicarboxylate (FDCA), a biobased platform chemical for the production of polymers. Active with a wide range of aromatic and aliphatic primary alcohols and aldehydes: acts on alcohol groups and requires the spontaneous hydration of aldehyde groups for their oxidation. To a lesser extent, is also able to catalyze the oxidation of thiols that are structurally similar to its alcohol substrates, yielding the corresponding thiocarbonyls. The protein is 5-(hydroxymethyl)furfural oxidase of Methylovorus sp. (strain MP688).